The chain runs to 62 residues: UPF0434 protein Rpic_2808 (62 aa).

Belongs to the UPF0434 family.

In Ralstonia pickettii (strain 12J), this protein is UPF0434 protein Rpic_2808.